A 651-amino-acid chain; its full sequence is LysM domain receptor-like kinase 3 (651 aa).

Positions 1 to 19 (MNLTFYIFFLSLLPSFSSS) are cleaved as a signal peptide. N-linked (GlcNAc...) asparagine glycans are attached at residues N2, N23, N42, N73, N86, N100, N114, and N177. The Extracellular segment spans residues 20 to 236 (KPMNCSDTTR…TAKSGSHVPY (217 aa)). Disulfide bonds link C24/C76, C31/C133, and C74/C131. The LysM domain maps to 142–186 (MSYVAMAGDSVQSLSSRFGVSMDRIEDVNGILNLDNITAGDLLYI). The tract at residues 196 to 216 (YETSKINPPAPSPAPASSLAN) is disordered. N218 and N225 each carry an N-linked (GlcNAc...) asparagine glycan. The chain crosses the membrane as a helical span at residues 237–257 (IWIVGGLGVVLALLVLCILVC). Residues 258-651 (ICLRSSSCSS…QVFSGLVQGR (394 aa)) are Cytoplasmic-facing. The residue at position 330 (T330) is a Phosphothreonine. A Protein kinase domain is found at 341 to 628 (FSDSNLLGHG…VVISLSQILL (288 aa)). ATP contacts are provided by residues 347–355 (LGHGNYGSV) and K368. Y410 is subject to Phosphotyrosine. The Proton acceptor role is filled by D464. Phosphoserine is present on S468. T500 and T505 each carry phosphothreonine. Position 513 is a phosphotyrosine (Y513).

The protein belongs to the protein kinase superfamily. Ser/Thr protein kinase family.

It is found in the cell membrane. Its function is as follows. Putative Lysin motif (LysM) receptor kinase that may recognize microbe-derived N-acetylglucosamine (NAG)-containing ligands. The sequence is that of LysM domain receptor-like kinase 3 (LYK3) from Arabidopsis thaliana (Mouse-ear cress).